The following is a 321-amino-acid chain: Phosphate acyltransferase (321 aa).

It belongs to the PlsX family. As to quaternary structure, homodimer. Probably interacts with PlsY.

The protein resides in the cytoplasm. The catalysed reaction is a fatty acyl-[ACP] + phosphate = an acyl phosphate + holo-[ACP]. It participates in lipid metabolism; phospholipid metabolism. Functionally, catalyzes the reversible formation of acyl-phosphate (acyl-PO(4)) from acyl-[acyl-carrier-protein] (acyl-ACP). This enzyme utilizes acyl-ACP as fatty acyl donor, but not acyl-CoA. This is Phosphate acyltransferase from Chlamydia trachomatis serovar L2 (strain ATCC VR-902B / DSM 19102 / 434/Bu).